The following is a 274-amino-acid chain: 2,3,4,5-tetrahydropyridine-2,6-dicarboxylate N-succinyltransferase (274 aa).

Substrate contacts are provided by R107 and D144.

This sequence belongs to the transferase hexapeptide repeat family. In terms of assembly, homotrimer.

The protein localises to the cytoplasm. The enzyme catalyses (S)-2,3,4,5-tetrahydrodipicolinate + succinyl-CoA + H2O = (S)-2-succinylamino-6-oxoheptanedioate + CoA. It participates in amino-acid biosynthesis; L-lysine biosynthesis via DAP pathway; LL-2,6-diaminopimelate from (S)-tetrahydrodipicolinate (succinylase route): step 1/3. This chain is 2,3,4,5-tetrahydropyridine-2,6-dicarboxylate N-succinyltransferase, found in Paracoccus denitrificans (strain Pd 1222).